Consider the following 226-residue polypeptide: Clarin-3 (226 aa).

Residues 8–28 traverse the membrane as a helical segment; that stretch reads LMFLSGFLTSLGSVVVICSIL. Asn46 and Asn83 each carry an N-linked (GlcNAc...) asparagine glycan. A run of 3 helical transmembrane segments spans residues 92–112, 128–148, and 181–201; these read VVII…MFTF, GVYT…VLFV, and FWLI…IIFY.

The protein belongs to the clarin family.

The protein localises to the membrane. In Rattus norvegicus (Rat), this protein is Clarin-3 (Clrn3).